The sequence spans 248 residues: 2,3-bisphosphoglycerate-dependent phosphoglycerate mutase (248 aa).

Residues 8–15 (RHGESVWN), 21–22 (TG), R60, 87–90 (ERHY), K98, and 114–115 (RR) contribute to the substrate site. Catalysis depends on H9, which acts as the Tele-phosphohistidine intermediate. The active-site Proton donor/acceptor is the E87. A disordered region spans residues 116–135 (SYDTPPPPMEVSDPRHPSHD). 183–184 (GN) lines the substrate pocket.

Belongs to the phosphoglycerate mutase family. BPG-dependent PGAM subfamily. Homodimer.

It carries out the reaction (2R)-2-phosphoglycerate = (2R)-3-phosphoglycerate. The protein operates within carbohydrate degradation; glycolysis; pyruvate from D-glyceraldehyde 3-phosphate: step 3/5. Its function is as follows. Catalyzes the interconversion of 2-phosphoglycerate and 3-phosphoglycerate. The polypeptide is 2,3-bisphosphoglycerate-dependent phosphoglycerate mutase (Bdellovibrio bacteriovorus (strain ATCC 15356 / DSM 50701 / NCIMB 9529 / HD100)).